Consider the following 369-residue polypeptide: Chorismate synthase (369 aa).

Residues Arg48 and Arg54 each coordinate NADP(+). Residues 125-127 (RSS), 238-239 (NA), Gly278, 293-297 (KPTSS), and Arg319 contribute to the FMN site.

The protein belongs to the chorismate synthase family. In terms of assembly, homotetramer. FMNH2 serves as cofactor.

It catalyses the reaction 5-O-(1-carboxyvinyl)-3-phosphoshikimate = chorismate + phosphate. It functions in the pathway metabolic intermediate biosynthesis; chorismate biosynthesis; chorismate from D-erythrose 4-phosphate and phosphoenolpyruvate: step 7/7. Its function is as follows. Catalyzes the anti-1,4-elimination of the C-3 phosphate and the C-6 proR hydrogen from 5-enolpyruvylshikimate-3-phosphate (EPSP) to yield chorismate, which is the branch point compound that serves as the starting substrate for the three terminal pathways of aromatic amino acid biosynthesis. This reaction introduces a second double bond into the aromatic ring system. This is Chorismate synthase from Cupriavidus metallidurans (strain ATCC 43123 / DSM 2839 / NBRC 102507 / CH34) (Ralstonia metallidurans).